Reading from the N-terminus, the 286-residue chain is Pantothenate synthetase (286 aa).

30–37 (MGNLHAGH) is an ATP binding site. H37 acts as the Proton donor in catalysis. Q61 provides a ligand contact to (R)-pantoate. Q61 provides a ligand contact to beta-alanine. ATP is bound at residue 149-152 (GEKD). Q155 is a binding site for (R)-pantoate. Residues V178 and 186–189 (MSSR) contribute to the ATP site.

Belongs to the pantothenate synthetase family. Homodimer.

The protein localises to the cytoplasm. It catalyses the reaction (R)-pantoate + beta-alanine + ATP = (R)-pantothenate + AMP + diphosphate + H(+). It participates in cofactor biosynthesis; (R)-pantothenate biosynthesis; (R)-pantothenate from (R)-pantoate and beta-alanine: step 1/1. Functionally, catalyzes the condensation of pantoate with beta-alanine in an ATP-dependent reaction via a pantoyl-adenylate intermediate. In Methylococcus capsulatus (strain ATCC 33009 / NCIMB 11132 / Bath), this protein is Pantothenate synthetase.